The following is a 390-amino-acid chain: MQYSRVFLIVMDSVGIGEQPDAPKFNDAGANTLGHIAERVAGFSLPNLQKLGLGNIAPLKNVEPVAAPMAHYGKMQEISMGKDTTTGHWEIMGLHVSTPFNTYPDGFPQELISEFEQRIGRKVLGNKVASGTDILDELGEEHMKTGAVIVYTSADSVFQVAAHEEIVPLEELYHICEVARELTLRDEFAVTRVIARPFLGQPGNFSRTANRHDYSVKPFAPTVMNRLQDAGLSSIAIGKISDIYAEEGVTQSIRTKDNMDGVDQILGTMKQSFTGLSFVNLVDFDAKFGHRRDPEGYGQALMEFDARIPELLEALQENDLLVITADHGNDPVHHGSDHTREYVPLLAYHKGIQAGQHLGIRETFADLGATIADNFGVTAPVIGKSFLNRL.

6 residues coordinate Mn(2+): aspartate 12, aspartate 285, histidine 290, aspartate 326, histidine 327, and histidine 338.

It belongs to the phosphopentomutase family. It depends on Mn(2+) as a cofactor.

The protein resides in the cytoplasm. The enzyme catalyses 2-deoxy-alpha-D-ribose 1-phosphate = 2-deoxy-D-ribose 5-phosphate. The catalysed reaction is alpha-D-ribose 1-phosphate = D-ribose 5-phosphate. It functions in the pathway carbohydrate degradation; 2-deoxy-D-ribose 1-phosphate degradation; D-glyceraldehyde 3-phosphate and acetaldehyde from 2-deoxy-alpha-D-ribose 1-phosphate: step 1/2. Functionally, isomerase that catalyzes the conversion of deoxy-ribose 1-phosphate (dRib-1-P) and ribose 1-phosphate (Rib-1-P) to deoxy-ribose 5-phosphate (dRib-5-P) and ribose 5-phosphate (Rib-5-P), respectively. In Brevibacillus brevis (strain 47 / JCM 6285 / NBRC 100599), this protein is Phosphopentomutase.